Consider the following 476-residue polypeptide: ATP synthase subunit beta (476 aa).

154–161 (GGAGVGKT) contributes to the ATP binding site.

The protein belongs to the ATPase alpha/beta chains family. As to quaternary structure, F-type ATPases have 2 components, CF(1) - the catalytic core - and CF(0) - the membrane proton channel. CF(1) has five subunits: alpha(3), beta(3), gamma(1), delta(1), epsilon(1). CF(0) has four main subunits: a(1), b(1), b'(1) and c(9-12).

It is found in the cell inner membrane. The catalysed reaction is ATP + H2O + 4 H(+)(in) = ADP + phosphate + 5 H(+)(out). In terms of biological role, produces ATP from ADP in the presence of a proton gradient across the membrane. The catalytic sites are hosted primarily by the beta subunits. This chain is ATP synthase subunit beta, found in Rhodopseudomonas palustris (strain ATCC BAA-98 / CGA009).